A 900-amino-acid polypeptide reads, in one-letter code: Isoleucine--tRNA ligase (900 aa).

The 'HIGH' region motif lies at 58 to 68 (PYANGDLHTGH). Residue Glu-550 participates in L-isoleucyl-5'-AMP binding. The short motif at 591 to 595 (KMSKS) is the 'KMSKS' region element. An ATP-binding site is contributed by Lys-594. Zn(2+) is bound by residues Cys-871, Cys-874, Cys-888, and Cys-891.

It belongs to the class-I aminoacyl-tRNA synthetase family. IleS type 1 subfamily. Monomer. It depends on Zn(2+) as a cofactor.

It is found in the cytoplasm. It catalyses the reaction tRNA(Ile) + L-isoleucine + ATP = L-isoleucyl-tRNA(Ile) + AMP + diphosphate. Catalyzes the attachment of isoleucine to tRNA(Ile). As IleRS can inadvertently accommodate and process structurally similar amino acids such as valine, to avoid such errors it has two additional distinct tRNA(Ile)-dependent editing activities. One activity is designated as 'pretransfer' editing and involves the hydrolysis of activated Val-AMP. The other activity is designated 'posttransfer' editing and involves deacylation of mischarged Val-tRNA(Ile). This chain is Isoleucine--tRNA ligase, found in Malacoplasma penetrans (strain HF-2) (Mycoplasma penetrans).